The chain runs to 557 residues: NADP-dependent malic enzyme (557 aa).

The Proton donor role is filled by Tyr-91. Arg-144 contributes to the NADP(+) binding site. Catalysis depends on Lys-162, which acts as the Proton acceptor. The a divalent metal cation site is built by Glu-234, Asp-235, and Asp-258. NADP(+) contacts are provided by residues Asp-258, 290 to 307, and Asn-397; that span reads GAGE…MAME.

This sequence belongs to the malic enzymes family. Homotetramer. It depends on Mg(2+) as a cofactor. The cofactor is Mn(2+).

The protein localises to the cytoplasm. The catalysed reaction is (S)-malate + NADP(+) = pyruvate + CO2 + NADPH. The enzyme catalyses oxaloacetate + H(+) = pyruvate + CO2. The protein is NADP-dependent malic enzyme (ME1) of Anas platyrhynchos (Mallard).